The following is a 258-amino-acid chain: Imidazole glycerol phosphate synthase subunit HisF (258 aa).

Catalysis depends on residues Asp11 and Asp130.

Belongs to the HisA/HisF family. Heterodimer of HisH and HisF.

It is found in the cytoplasm. It carries out the reaction 5-[(5-phospho-1-deoxy-D-ribulos-1-ylimino)methylamino]-1-(5-phospho-beta-D-ribosyl)imidazole-4-carboxamide + L-glutamine = D-erythro-1-(imidazol-4-yl)glycerol 3-phosphate + 5-amino-1-(5-phospho-beta-D-ribosyl)imidazole-4-carboxamide + L-glutamate + H(+). It participates in amino-acid biosynthesis; L-histidine biosynthesis; L-histidine from 5-phospho-alpha-D-ribose 1-diphosphate: step 5/9. Its function is as follows. IGPS catalyzes the conversion of PRFAR and glutamine to IGP, AICAR and glutamate. The HisF subunit catalyzes the cyclization activity that produces IGP and AICAR from PRFAR using the ammonia provided by the HisH subunit. This chain is Imidazole glycerol phosphate synthase subunit HisF, found in Methylorubrum populi (strain ATCC BAA-705 / NCIMB 13946 / BJ001) (Methylobacterium populi).